The sequence spans 219 residues: Thiopurine S-methyltransferase (219 aa).

Trp10, Leu45, Glu66, and Arg123 together coordinate S-adenosyl-L-methionine.

Belongs to the class I-like SAM-binding methyltransferase superfamily. TPMT family.

The protein resides in the cytoplasm. The enzyme catalyses S-adenosyl-L-methionine + a thiopurine = S-adenosyl-L-homocysteine + a thiopurine S-methylether.. This Bordetella bronchiseptica (strain ATCC BAA-588 / NCTC 13252 / RB50) (Alcaligenes bronchisepticus) protein is Thiopurine S-methyltransferase.